A 267-amino-acid polypeptide reads, in one-letter code: 4-hydroxy-tetrahydrodipicolinate reductase (267 aa).

NAD(+)-binding positions include 10–15 and Glu36; that span reads GCGGRM. Arg37 serves as a coordination point for NADP(+). NAD(+)-binding positions include 99–101 and 123–126; these read GTT and APNF. His156 serves as the catalytic Proton donor/acceptor. Position 157 (His157) interacts with (S)-2,3,4,5-tetrahydrodipicolinate. The active-site Proton donor is the Lys160. Position 166–167 (166–167) interacts with (S)-2,3,4,5-tetrahydrodipicolinate; sequence GT.

This sequence belongs to the DapB family.

The protein resides in the cytoplasm. The catalysed reaction is (S)-2,3,4,5-tetrahydrodipicolinate + NAD(+) + H2O = (2S,4S)-4-hydroxy-2,3,4,5-tetrahydrodipicolinate + NADH + H(+). It carries out the reaction (S)-2,3,4,5-tetrahydrodipicolinate + NADP(+) + H2O = (2S,4S)-4-hydroxy-2,3,4,5-tetrahydrodipicolinate + NADPH + H(+). It functions in the pathway amino-acid biosynthesis; L-lysine biosynthesis via DAP pathway; (S)-tetrahydrodipicolinate from L-aspartate: step 4/4. In terms of biological role, catalyzes the conversion of 4-hydroxy-tetrahydrodipicolinate (HTPA) to tetrahydrodipicolinate. This is 4-hydroxy-tetrahydrodipicolinate reductase from Laribacter hongkongensis (strain HLHK9).